A 435-amino-acid polypeptide reads, in one-letter code: E3 ubiquitin-protein ligase itt1 (435 aa).

Residues 16 to 135 enclose the RWD domain; the sequence is DELIALQSIY…EHVRSIATIA (120 aa). The tract at residues 170 to 420 is TRIAD supradomain; sequence RKFQCNVCFD…DPVSSCYGML (251 aa). 18 residues coordinate Zn(2+): Cys-174, Cys-177, Cys-192, His-194, Cys-197, Cys-200, Cys-219, Cys-224, Cys-266, Cys-271, Cys-286, Cys-289, Cys-294, Cys-297, His-302, Cys-308, Cys-368, and Cys-371. An RING-type 1 zinc finger spans residues 174 to 224; it reads CNVCFDEFNGTDCFQLTRCGHVSCQSCLRDYYTMCIQEGMFSQIKCIDLDC. Residues 245–308 form an IBR-type zinc finger; the sequence is TNRYKELEEK…ATWHGDLSPC (64 aa). The segment at 368-396 adopts an RING-type 2; atypical zinc-finger fold; sequence CPTCDRVVERIDGCCHMNCLCGTHFCFLC. Residue Cys-381 is part of the active site. Residues Cys-386, Cys-388, Cys-393, Cys-396, His-408, and Cys-416 each coordinate Zn(2+).

Belongs to the RBR family. RNF14 subfamily.

It localises to the cytoplasm. It is found in the nucleus. It carries out the reaction [E2 ubiquitin-conjugating enzyme]-S-ubiquitinyl-L-cysteine + [acceptor protein]-L-lysine = [E2 ubiquitin-conjugating enzyme]-L-cysteine + [acceptor protein]-N(6)-ubiquitinyl-L-lysine.. The protein operates within protein modification; protein ubiquitination. Functionally, E3 ubiquitin-protein ligase involved in the rescue of stalled ribosomes by promoting ubiquitination and degradation of proteins on stalled ribosomes. Specifically required to resolve RNA-protein cross-links caused by reactive aldehydes, which trigger translation stress by stalling ribosomes: acts by catalying 'Lys-6'-linked ubiquitination of RNA-protein cross-links, leading to their degradation. This Schizosaccharomyces pombe (strain 972 / ATCC 24843) (Fission yeast) protein is E3 ubiquitin-protein ligase itt1 (itt1).